The following is a 288-amino-acid chain: Solute carrier family 25 member 45 (288 aa).

Solcar repeat units follow at residues 1–83 (MPVE…TLLA), 97–191 (PSYT…LCRQ), and 199–286 (PSSA…LLRL). 6 consecutive transmembrane segments (helical) span residues 6-26 (FVAG…FDTV), 58-78 (GMSF…GVYS), 102-122 (IFIA…PFDL), 166-186 (GSWA…VTYE), 202-222 (ATVL…ATPF), and 266-286 (SARA…LLRL).

Belongs to the mitochondrial carrier (TC 2.A.29) family. In terms of tissue distribution, widely expressed, with highest levels in testis, liver and kidney and low levels in brain, including cortex, cerebellum, hippocampus and hypothalamus, and heart.

The protein resides in the mitochondrion inner membrane. The polypeptide is Solute carrier family 25 member 45 (Slc25a45) (Mus musculus (Mouse)).